Here is a 141-residue protein sequence, read N- to C-terminus: Ribosomal RNA large subunit methyltransferase H (141 aa).

Gly-88 serves as a coordination point for S-adenosyl-L-methionine.

The protein belongs to the RNA methyltransferase RlmH family. In terms of assembly, homodimer.

It localises to the cytoplasm. It carries out the reaction pseudouridine(1915) in 23S rRNA + S-adenosyl-L-methionine = N(3)-methylpseudouridine(1915) in 23S rRNA + S-adenosyl-L-homocysteine + H(+). Functionally, specifically methylates the pseudouridine at position 1915 (m3Psi1915) in 23S rRNA. The polypeptide is Ribosomal RNA large subunit methyltransferase H (Novosphingobium aromaticivorans (strain ATCC 700278 / DSM 12444 / CCUG 56034 / CIP 105152 / NBRC 16084 / F199)).